The chain runs to 180 residues: ATP-dependent protease subunit HslV (180 aa).

Residue T5 is part of the active site. G161, C164, and T167 together coordinate Na(+).

It belongs to the peptidase T1B family. HslV subfamily. A double ring-shaped homohexamer of HslV is capped on each side by a ring-shaped HslU homohexamer. The assembly of the HslU/HslV complex is dependent on binding of ATP.

It is found in the cytoplasm. It carries out the reaction ATP-dependent cleavage of peptide bonds with broad specificity.. Its activity is regulated as follows. Allosterically activated by HslU binding. Protease subunit of a proteasome-like degradation complex believed to be a general protein degrading machinery. The chain is ATP-dependent protease subunit HslV from Campylobacter jejuni subsp. jejuni serotype O:6 (strain 81116 / NCTC 11828).